The sequence spans 197 residues: Imidazoleglycerol-phosphate dehydratase (197 aa).

The protein belongs to the imidazoleglycerol-phosphate dehydratase family.

Its subcellular location is the cytoplasm. It catalyses the reaction D-erythro-1-(imidazol-4-yl)glycerol 3-phosphate = 3-(imidazol-4-yl)-2-oxopropyl phosphate + H2O. The protein operates within amino-acid biosynthesis; L-histidine biosynthesis; L-histidine from 5-phospho-alpha-D-ribose 1-diphosphate: step 6/9. The protein is Imidazoleglycerol-phosphate dehydratase of Rhodopseudomonas palustris (strain TIE-1).